A 290-amino-acid polypeptide reads, in one-letter code: ATP synthase gamma chain (290 aa).

Belongs to the ATPase gamma chain family. In terms of assembly, F-type ATPases have 2 components, CF(1) - the catalytic core - and CF(0) - the membrane proton channel. CF(1) has five subunits: alpha(3), beta(3), gamma(1), delta(1), epsilon(1). CF(0) has three main subunits: a, b and c.

Its subcellular location is the cell inner membrane. Its function is as follows. Produces ATP from ADP in the presence of a proton gradient across the membrane. The gamma chain is believed to be important in regulating ATPase activity and the flow of protons through the CF(0) complex. This is ATP synthase gamma chain from Dictyoglomus thermophilum (strain ATCC 35947 / DSM 3960 / H-6-12).